The following is a 141-amino-acid chain: Hemoglobin subunit alpha-D (141 aa).

One can recognise a Globin domain in the interval 1-141 (MLTADDKKLI…VASVLAEKYR (141 aa)). Residues histidine 58 and histidine 87 each contribute to the heme b site.

This sequence belongs to the globin family. As to quaternary structure, heterotetramer of two alpha-D chains and two beta chains. In terms of tissue distribution, red blood cells.

In terms of biological role, involved in oxygen transport from the lung to the various peripheral tissues. The sequence is that of Hemoglobin subunit alpha-D (HBAD) from Rhea americana (Greater rhea).